Reading from the N-terminus, the 203-residue chain is Small ribosomal subunit protein uS7 (203 aa).

The interval 1–21 is disordered; sequence MSSEAPEPDAPASTDDERVSA.

It belongs to the universal ribosomal protein uS7 family. Part of the 30S ribosomal subunit.

Its function is as follows. One of the primary rRNA binding proteins, it binds directly to 16S rRNA where it nucleates assembly of the head domain of the 30S subunit. Is located at the subunit interface close to the decoding center. This is Small ribosomal subunit protein uS7 from Natronomonas pharaonis (strain ATCC 35678 / DSM 2160 / CIP 103997 / JCM 8858 / NBRC 14720 / NCIMB 2260 / Gabara) (Halobacterium pharaonis).